Consider the following 318-residue polypeptide: Retinol dehydrogenase 11 (318 aa).

A helical; Signal-anchor for type II membrane protein membrane pass occupies residues 1–21; sequence MVELMFPLLLLLLPFLLYMAA. The Cytoplasmic portion of the chain corresponds to 22–318; sequence PQIRKMLSSG…SCDLLGLPID (297 aa). 48-54 is an NADP(+) binding site; it reads GANTGIG. N6-acetyllysine is present on Lys-112. Ser-177 contributes to the substrate binding site. Tyr-202 functions as the Proton acceptor in the catalytic mechanism.

Belongs to the short-chain dehydrogenases/reductases (SDR) family. In terms of assembly, interacts with SELENOF. Post-translationally, not glycosylated. Predominantly expressed in the epithelial cells of prostate, in both basal and luminal secretory cell populations. Expressed at low levels in spleen, thymus, testis, ovary, small intestine, colon, peripherical blood leukocytes, kidney, adrenal gland and fetal liver. Not detected in prostatic fibromuscular stromal cells, endothelial cells, or infiltrating lymphocytes.

Its subcellular location is the endoplasmic reticulum membrane. The enzyme catalyses all-trans-retinol + NADP(+) = all-trans-retinal + NADPH + H(+). It catalyses the reaction 11-cis-retinol + NADP(+) = 11-cis-retinal + NADPH + H(+). It carries out the reaction 9-cis-retinol + NADP(+) = 9-cis-retinal + NADPH + H(+). The catalysed reaction is 13-cis-retinol + NADP(+) = 13-cis-retinal + NADPH + H(+). It functions in the pathway cofactor metabolism; retinol metabolism. With respect to regulation, SELENOF decreases the retinol dehydrogenase activity. Its function is as follows. Retinol dehydrogenase with a clear preference for NADP. Displays high activity towards 9-cis, 11-cis and all-trans-retinol, and to a lesser extent on 13-cis-retinol. Exhibits a low reductive activity towards unsaturated medium-chain aldehydes such as cis -6-nonenal and no activity toward nonanal or 4-hydroxy-nonenal. Has no dehydrogenase activity towards steroid. The protein is Retinol dehydrogenase 11 (RDH11) of Homo sapiens (Human).